Reading from the N-terminus, the 118-residue chain is Large ribosomal subunit protein uL18 (118 aa).

This sequence belongs to the universal ribosomal protein uL18 family. As to quaternary structure, part of the 50S ribosomal subunit; part of the 5S rRNA/L5/L18/L25 subcomplex. Contacts the 5S and 23S rRNAs.

Its function is as follows. This is one of the proteins that bind and probably mediate the attachment of the 5S RNA into the large ribosomal subunit, where it forms part of the central protuberance. This chain is Large ribosomal subunit protein uL18, found in Campylobacter concisus (strain 13826).